The primary structure comprises 563 residues: Lipase 2 (563 aa).

The N-terminal stretch at 1 to 19 (MVSKSLFLAAAVNLAGVLA) is a signal peptide. Position 20 is a pyrrolidone carboxylic acid (Gln-20). A disulfide bridge connects residues Cys-80 and Cys-124. The active-site Acyl-ester intermediate is the Ser-236. Cys-295 and Cys-307 are oxidised to a cystine. An N-linked (GlcNAc...) asparagine glycan is attached at Asn-302. Glu-373 acts as the Charge relay system in catalysis. A glycan (N-linked (GlcNAc...) asparagine) is linked at Asn-383. The active-site Charge relay system is the His-482.

It belongs to the type-B carboxylesterase/lipase family. In terms of assembly, monomer.

It is found in the secreted. It carries out the reaction a triacylglycerol + H2O = a diacylglycerol + a fatty acid + H(+). Functionally, hydrolyzes all ester bonds in triglyceride and displays a high affinity for triolein. For unsaturated substrates having long fatty acyl chains (C18:2 cis-9, cis-12 and C18:3 cis-9, cis-12, cis-15) GCL I shows higher specific activity than GCL II, whereas GCL II shows higher specific activity against saturated substrates having short fatty acid chains (C8, C10, C12 and C14). This is Lipase 2 (LIP2) from Geotrichum candidum (Oospora lactis).